The primary structure comprises 225 residues: uncharacterized protein (225 aa).

The chain crosses the membrane as a helical span at residues 181 to 203; the sequence is INIFVVFMFIIYLLFYIISSTVF.

It is found in the cell membrane. This is an uncharacterized protein from Bacillus anthracis.